We begin with the raw amino-acid sequence, 220 residues long: Fructose-6-phosphate aldolase 1 (220 aa).

K85 (schiff-base intermediate with substrate) is an active-site residue.

The protein belongs to the transaldolase family. Type 3A subfamily. Homodecamer.

It is found in the cytoplasm. The catalysed reaction is beta-D-fructose 6-phosphate = dihydroxyacetone + D-glyceraldehyde 3-phosphate. Functionally, catalyzes the reversible formation of fructose 6-phosphate from dihydroxyacetone and D-glyceraldehyde 3-phosphate via an aldolization reaction. The sequence is that of Fructose-6-phosphate aldolase 1 (fsaA) from Escherichia coli O6:H1 (strain CFT073 / ATCC 700928 / UPEC).